The primary structure comprises 179 residues: uncharacterized protein (179 aa).

This is an uncharacterized protein from Sulfolobus islandicus rod-shaped virus 1 (SIRV-1).